The following is a 162-amino-acid chain: CASP-like protein BLE3 (162 aa).

Over 1-7 (MAKVHRL) the chain is Cytoplasmic. The helical transmembrane segment at 8–28 (MNAVLRLAAAAAAATAAVVMV) threads the bilayer. Residues 29 to 50 (TSRETTSFFGIQMEAKYSYTPS) lie on the Extracellular side of the membrane. A helical transmembrane segment spans residues 51 to 71 (FIFFVVAYAVAAAYSLLVLAV). Topologically, residues 72 to 85 (PAGSALSRLALTTD) are cytoplasmic. The helical transmembrane segment at 86 to 106 (VVLGMVLAGAVASAGAISDIA) threads the bilayer. Residues 107–128 (KNGNSHAGWLPVCGQIHAYCNH) are Extracellular-facing. Residues 129–149 (VMAALIAGFVALAVHFVVVMY) form a helical membrane-spanning segment. Residues 150-162 (SLHIVTDVICPCH) are Cytoplasmic-facing.

It belongs to the Casparian strip membrane proteins (CASP) family. As to quaternary structure, homodimer and heterodimers.

It localises to the cell membrane. In terms of biological role, involved in cell elongation in rice through dual regulation by brassinolide and auxin. The protein is CASP-like protein BLE3 (BLE3) of Oryza sativa subsp. indica (Rice).